A 643-amino-acid polypeptide reads, in one-letter code: Protein RTF1 homolog (643 aa).

Disordered stretches follow at residues 1–107 and 124–262; these read MGDL…YKNE and ILSE…SDVP. Gly-2 carries the N-acetylglycine modification. The span at 65–77 shows a compositional bias: basic and acidic residues; it reads KRLEAEREDRAAR. At Ser-87 the chain carries Phosphoserine. Over residues 124-157 the composition is skewed to basic and acidic residues; sequence ILSERADKKGDKNFTEKLRSKRESEKTPVSKKET. Residues 162-171 are compositionally biased toward low complexity; that stretch reads ASRGVRSSAR. Residues 172 to 188 are compositionally biased toward basic and acidic residues; sequence SADRAAAKDDALNELRA. A compositionally biased stretch (low complexity) spans 225–235; the sequence is SSNLSSSSQSD. The Plus3 domain maps to 261–396; it reads VPTFEDVKEV…KKEAIQRTNS (136 aa).

Component of the nuclear PAF1 complex (PAF1C), which consists of VIP2/ELF7/PAF1, VIP3/SKI8/WDR61, VIP4/LEO1, VIP5/RTF1, VIP6/ELF8/CTR9 and CDC73.

It is found in the nucleus. Functionally, component of the PAF1 complex (PAF1C) which is involved in histone modifications such as methylation on histone H3 'Lys-4' (H3K4me3). Involved in regulation of flowering time. Required for the expression of the flowering repressors and FLC and MADS-box genes of the MAF family. Involved in the control of seed dormancy and germination. The chain is Protein RTF1 homolog from Arabidopsis thaliana (Mouse-ear cress).